The primary structure comprises 682 residues: DNA ligase (682 aa).

Residues 42–46 (DAEYD), 91–92 (SL), and glutamate 124 each bind NAD(+). Lysine 126 serves as the catalytic N6-AMP-lysine intermediate. Arginine 147, glutamate 184, lysine 302, and lysine 326 together coordinate NAD(+). 4 residues coordinate Zn(2+): cysteine 420, cysteine 423, cysteine 438, and cysteine 444. The BRCT domain maps to 603 to 682 (IADNPLKGKS…QEFIALTGEN (80 aa)).

Belongs to the NAD-dependent DNA ligase family. LigA subfamily. Mg(2+) is required as a cofactor. The cofactor is Mn(2+).

The catalysed reaction is NAD(+) + (deoxyribonucleotide)n-3'-hydroxyl + 5'-phospho-(deoxyribonucleotide)m = (deoxyribonucleotide)n+m + AMP + beta-nicotinamide D-nucleotide.. In terms of biological role, DNA ligase that catalyzes the formation of phosphodiester linkages between 5'-phosphoryl and 3'-hydroxyl groups in double-stranded DNA using NAD as a coenzyme and as the energy source for the reaction. It is essential for DNA replication and repair of damaged DNA. This Actinobacillus pleuropneumoniae serotype 7 (strain AP76) protein is DNA ligase.